We begin with the raw amino-acid sequence, 1146 residues long: Nitrogen permease regulator 3 (1146 aa).

The first 25 residues, 1-25 (MDECLPNSCLLGVHLVISTHSGPQI), serve as a signal peptide directing secretion. Ser-76 carries the phosphoserine modification. Disordered regions lie at residues 90-159 (AITP…LSDS), 177-221 (SSLS…SPQM), 237-340 (SGTN…HHYH), and 440-466 (GRWRKSKHKNKTRSKRSSSTTTNISRK). The segment covering 105 to 123 (LPPTRSHANTVGSQSSIPA) has biased composition (polar residues). Low complexity-rich tracts occupy residues 150–159 (ETSSSGLSDS) and 177–196 (SSLSSSSLSSSPSSSSSSSP). 3 stretches are compositionally biased toward polar residues: residues 201–221 (LSRTNSSFQSTDSMSPTSPQM), 237–253 (SGTNNKSRAASKRSQNF), and 277–303 (KPSQSTKKGNKLLKNTSNETDGNAFTG). The span at 304-315 (SCSISSKKSLSS) shows a compositional bias: low complexity. The span at 323–334 (LRNSSLNDTPGQ) shows a compositional bias: polar residues. Residues 441 to 455 (RWRKSKHKNKTRSKR) are compositionally biased toward basic residues. Ser-486 and Ser-987 each carry phosphoserine. A disordered region spans residues 979-1047 (KTNTARRPSM…SRVDDRDDNE (69 aa)). Composition is skewed to basic and acidic residues over residues 986 to 1004 (PSMDYKKTDKKLDDEDGQS) and 1025 to 1042 (NNKDVDEKDNENDSRVDD).

The protein belongs to the NPR3 family. Component of the SEA complex composed of at least IML1/SEA1, RTC1/SEA2, MTC5/SEA3, NPR2, NPR3, SEA4, SEC13 and SEH1. Forms a heterodimer with NPR2.

The protein localises to the vacuole membrane. Component of the SEA complex which coats the vacuolar membrane and is involved in intracellular trafficking, autophagy, response to nitrogen starvation, and amino acid biogenesis. Mediates inactivation of the TORC1 complex in response to amino acid starvation. Required for meiotic nuclear division. The protein is Nitrogen permease regulator 3 (NPR3) of Saccharomyces cerevisiae (strain ATCC 204508 / S288c) (Baker's yeast).